Here is a 201-residue protein sequence, read N- to C-terminus: Small ribosomal subunit protein uS4 (201 aa).

The region spanning 91 to 157 (SRLDNVIYRA…VPFQIARETV (67 aa)) is the S4 RNA-binding domain.

It belongs to the universal ribosomal protein uS4 family. In terms of assembly, part of the 30S ribosomal subunit. Contacts protein S5. The interaction surface between S4 and S5 is involved in control of translational fidelity.

Its function is as follows. One of the primary rRNA binding proteins, it binds directly to 16S rRNA where it nucleates assembly of the body of the 30S subunit. Functionally, with S5 and S12 plays an important role in translational accuracy. The sequence is that of Small ribosomal subunit protein uS4 from Mycobacterium leprae (strain Br4923).